A 367-amino-acid chain; its full sequence is D-alanine--D-alanine ligase (367 aa).

The ATP-grasp domain maps to 150 to 357 (KKLLASAGLP…YPTLLATMVE (208 aa)). ATP is bound at residue 178–233 (RERLGLPVFVKPSRGGSSIGVSRVTAWDELPAAIELARRHDPKVIIEAAVPGRELE). The Mg(2+) site is built by D312, E324, and N326.

It belongs to the D-alanine--D-alanine ligase family. The cofactor is Mg(2+). It depends on Mn(2+) as a cofactor.

It localises to the cytoplasm. It catalyses the reaction 2 D-alanine + ATP = D-alanyl-D-alanine + ADP + phosphate + H(+). The protein operates within cell wall biogenesis; peptidoglycan biosynthesis. Functionally, cell wall formation. The sequence is that of D-alanine--D-alanine ligase from Mycolicibacterium gilvum (strain PYR-GCK) (Mycobacterium gilvum (strain PYR-GCK)).